The primary structure comprises 650 residues: 1-deoxy-D-xylulose-5-phosphate synthase (650 aa).

Thiamine diphosphate is bound by residues His73 and 113-115; that span reads SHA. Asp145 serves as a coordination point for Mg(2+). Residues 146–147, Asn175, Tyr287, and Glu369 contribute to the thiamine diphosphate site; that span reads GA. Asn175 provides a ligand contact to Mg(2+). The disordered stretch occupies residues 629–650; sequence SARPLPEDAERVPMRAEDDEQA. The segment covering 633 to 644 has biased composition (basic and acidic residues); the sequence is LPEDAERVPMRA.

Belongs to the transketolase family. DXPS subfamily. As to quaternary structure, homodimer. It depends on Mg(2+) as a cofactor. Thiamine diphosphate is required as a cofactor.

The enzyme catalyses D-glyceraldehyde 3-phosphate + pyruvate + H(+) = 1-deoxy-D-xylulose 5-phosphate + CO2. The protein operates within metabolic intermediate biosynthesis; 1-deoxy-D-xylulose 5-phosphate biosynthesis; 1-deoxy-D-xylulose 5-phosphate from D-glyceraldehyde 3-phosphate and pyruvate: step 1/1. Functionally, catalyzes the acyloin condensation reaction between C atoms 2 and 3 of pyruvate and glyceraldehyde 3-phosphate to yield 1-deoxy-D-xylulose-5-phosphate (DXP). In Clavibacter sepedonicus (Clavibacter michiganensis subsp. sepedonicus), this protein is 1-deoxy-D-xylulose-5-phosphate synthase.